The sequence spans 396 residues: Ribosomal RNA large subunit methyltransferase I (396 aa).

The PUA domain maps to 2–79 (AVRIKLKPGR…REEEIDREFF (78 aa)).

The protein belongs to the methyltransferase superfamily. RlmI family.

The protein localises to the cytoplasm. The catalysed reaction is cytidine(1962) in 23S rRNA + S-adenosyl-L-methionine = 5-methylcytidine(1962) in 23S rRNA + S-adenosyl-L-homocysteine + H(+). Its function is as follows. Specifically methylates the cytosine at position 1962 (m5C1962) of 23S rRNA. This is Ribosomal RNA large subunit methyltransferase I from Shewanella sp. (strain MR-7).